The chain runs to 129 residues: Large ribosomal subunit protein bL20 (129 aa).

The protein belongs to the bacterial ribosomal protein bL20 family.

In terms of biological role, binds directly to 23S ribosomal RNA and is necessary for the in vitro assembly process of the 50S ribosomal subunit. It is not involved in the protein synthesizing functions of that subunit. This Mycobacterium tuberculosis (strain ATCC 25177 / H37Ra) protein is Large ribosomal subunit protein bL20.